We begin with the raw amino-acid sequence, 412 residues long: Divalent metal cation transporter MntH (412 aa).

Over 1 to 19 the chain is Cytoplasmic; the sequence is MTNYRVESSSGRAARKMRL. Residues 20 to 39 form a helical membrane-spanning segment; that stretch reads ALMGPAFIAAIGYIDPGNFA. The Periplasmic segment spans residues 40–51; sequence TNIQAGASFGYQ. The helical transmembrane segment at 52-71 threads the bilayer; it reads LLWVVVWANLMAMLIQILSA. Over 72-95 the chain is Cytoplasmic; it reads KLGIATGKNLAEQIRDHYPRPFVW. Residues 96–118 form a helical membrane-spanning segment; sequence FYWVQAEIIAMATDLAEFIGAAI. Residues 119 to 125 are Periplasmic-facing; it reads GFKLILG. Residues 126-145 form a helical membrane-spanning segment; the sequence is VSLLQGAVLTGIATFLILML. At 146–155 the chain is on the cytoplasmic side; the sequence is QRRGQKPLEK. The helical transmembrane segment at 156-175 threads the bilayer; it reads VIGGLLLFVAAAYIVELIFS. Topologically, residues 176 to 196 are periplasmic; sequence QPNLAQLGKGMVIPSLPTSEA. A helical membrane pass occupies residues 197–220; it reads VFLAAGVLGATIMPHVIYLHSSLT. Residues 221 to 238 lie on the Cytoplasmic side of the membrane; sequence QHLHGGSRQQRYSATKWD. A helical transmembrane segment spans residues 239–258; that stretch reads VAIAMTIAGFVNLAMMATAA. Residues 259-276 are Periplasmic-facing; it reads AAFHFSGHTGVADLDEAY. The helical transmembrane segment at 277–297 threads the bilayer; the sequence is LTLQPLLSHAAATVFGLSLVA. Residues 298–327 lie on the Cytoplasmic side of the membrane; it reads AGLSSTVVGTLAGQVVMQGFIRFHIPLWVR. The chain crosses the membrane as a helical span at residues 328–344; it reads RTVTMLPSFIVILMGLD. Over 345–350 the chain is Periplasmic; sequence PTRILV. The chain crosses the membrane as a helical span at residues 351-370; it reads MSQVLLSFGIALALVPLLIF. Residues 371 to 387 lie on the Cytoplasmic side of the membrane; that stretch reads TSDSKLMGDLVNSKRVK. The helical transmembrane segment at 388 to 406 threads the bilayer; sequence QTGWVIVVLVVALNIWLLV. Topologically, residues 407 to 412 are periplasmic; it reads GTALGL.

Belongs to the NRAMP family.

The protein localises to the cell inner membrane. Functionally, h(+)-stimulated, divalent metal cation uptake system. This Escherichia coli O127:H6 (strain E2348/69 / EPEC) protein is Divalent metal cation transporter MntH.